The chain runs to 702 residues: 1,4-alpha-glucan-branching enzyme (702 aa).

Ala2 is modified (N-acetylalanine). Residues 62–63 and 91–93 contribute to the substrate site; these read NE and WAP. (1,4-alpha-D-glucosyl)n is bound at residue Trp107. Residue 118–121 participates in substrate binding; that stretch reads EYGK. A (1,4-alpha-D-glucosyl)n-binding site is contributed by Lys143. Tyr173 is modified (phosphotyrosine). Position 333–336 (333–336) interacts with substrate; sequence EVLR. The Nucleophile role is filled by Asp357. Residue Glu412 is the Proton donor of the active site.

It belongs to the glycosyl hydrolase 13 family. GlgB subfamily. Monomer.

It carries out the reaction Transfers a segment of a (1-&gt;4)-alpha-D-glucan chain to a primary hydroxy group in a similar glucan chain.. The protein operates within glycan biosynthesis; glycogen biosynthesis. Glycogen-branching enzyme participates in the glycogen biosynthetic process along with glycogenin and glycogen synthase. Generates alpha-1,6-glucosidic branches from alpha-1,4-linked glucose chains, to increase solubility of the glycogen polymer. The polypeptide is 1,4-alpha-glucan-branching enzyme (Gbe1) (Mus musculus (Mouse)).